Here is a 687-residue protein sequence, read N- to C-terminus: Histone deacetylase clr3 (687 aa).

The histone deacetylase stretch occupies residues 55 to 385; sequence KKSGLCYDPR…ALAVAQSLLG (331 aa). The active site involves His-195.

It belongs to the histone deacetylase family. HD type 2 subfamily. Interacts with ccq1, clr1, clr2 and mit1.

It is found in the nucleus. The protein localises to the chromosome. Its subcellular location is the centromere. It localises to the telomere. The enzyme catalyses N(6)-acetyl-L-lysyl-[histone] + H2O = L-lysyl-[histone] + acetate. In terms of biological role, responsible for the deacetylation of lysine residues on the N-terminal part of the core histones (H2A, H2B, H3 and H4). Histone deacetylation gives a tag for epigenetic repression and plays an important role in transcriptional regulation, cell cycle progression and developmental events. Histone deacetylases act via the formation of large multiprotein complexes. Required for proper positioning of nucleosomes at heterochromatic loci and for transcriptional gene silencing (TGS) function of the Snf2/Hdac-containing repressor complex (SHREC). The chain is Histone deacetylase clr3 (clr3) from Schizosaccharomyces pombe (strain 972 / ATCC 24843) (Fission yeast).